The following is a 400-amino-acid chain: Enoyl-[acyl-carrier-protein] reductase [NADH] (400 aa).

Residues 48 to 53, 74 to 75, 111 to 112, and 139 to 140 contribute to the NAD(+) site; these read GASTGY, FE, DA, and LA. Tyrosine 225 serves as a coordination point for substrate. Residue tyrosine 235 is the Proton donor of the active site. Residues lysine 244 and 273–275 contribute to the NAD(+) site; that span reads VVT.

It belongs to the TER reductase family. In terms of assembly, monomer.

The catalysed reaction is a 2,3-saturated acyl-[ACP] + NAD(+) = a (2E)-enoyl-[ACP] + NADH + H(+). Its pathway is lipid metabolism; fatty acid biosynthesis. Functionally, involved in the final reduction of the elongation cycle of fatty acid synthesis (FAS II). Catalyzes the reduction of a carbon-carbon double bond in an enoyl moiety that is covalently linked to an acyl carrier protein (ACP). In Burkholderia vietnamiensis (strain G4 / LMG 22486) (Burkholderia cepacia (strain R1808)), this protein is Enoyl-[acyl-carrier-protein] reductase [NADH].